Consider the following 101-residue polypeptide: Movement protein (101 aa).

Residues 30–50 traverse the membrane as a helical segment; that stretch reads EVAILSFVALICIYLLYLWVL. Positions 80 to 101 are disordered; it reads PIPNTLEPTAPVHPGPFVPGQG. Pro residues predominate over residues 90–101; that stretch reads PVHPGPFVPGQG.

The protein belongs to the mastrevirus movement protein family. As to quaternary structure, interacts with the capsid protein (CP). Part of a MP-CP-viral DNA complex.

It is found in the host membrane. Its function is as follows. Involved in the viral transport within, and between cells. The polypeptide is Movement protein (Avena sativa (Oat)).